Here is a 157-residue protein sequence, read N- to C-terminus: Transcription antitermination protein NusB (157 aa).

It belongs to the NusB family.

Involved in transcription antitermination. Required for transcription of ribosomal RNA (rRNA) genes. Binds specifically to the boxA antiterminator sequence of the ribosomal RNA (rrn) operons. This is Transcription antitermination protein NusB from Xylella fastidiosa (strain M12).